A 673-amino-acid chain; its full sequence is Ribonucleoprotein PTB-binding 2 (673 aa).

Positions 1-17 (MAARGGGAGGAGSGSGP) are enriched in gly residues. Residues 1–34 (MAARGGGAGGAGSGSGPSAGTAGEAAEPALRPGE) form a disordered region. A compositionally biased stretch (low complexity) spans 18–29 (SAGTAGEAAEPA). RRM domains are found at residues 58-129 (RKIL…LQPT), 131-209 (ALLC…WMDV), and 220-298 (KCLC…FCAP). The tract at residues 481 to 549 (QLPAGQAGPG…KGTEVASKNQ (69 aa)) is disordered. A compositionally biased stretch (low complexity) spans 499–512 (SASVSISEASFSGS). The span at 529–549 (TGNQKTPQSQPKGTEVASKNQ) shows a compositional bias: polar residues.

As to quaternary structure, interacts with PTBP1 and RAVER1. As to expression, expressed throughout embryogenesis. Detected at low levels in adult lung, brain and kidney, but not in the other tissues tested.

The protein localises to the nucleus. Its subcellular location is the cytoplasm. Its function is as follows. May bind single-stranded nucleic acids. In Mus musculus (Mouse), this protein is Ribonucleoprotein PTB-binding 2 (Raver2).